The following is a 227-amino-acid chain: Cytochrome c oxidase subunit 2 (227 aa).

At 1–14 (MAYPFQLGLQDATS) the chain is on the mitochondrial intermembrane side. A helical transmembrane segment spans residues 15-45 (PIMEELMNFHDHTLMIVFLISTLVLYIISLM). Topologically, residues 46–59 (LTTKLTHTSTMDAQ) are mitochondrial matrix. The chain crosses the membrane as a helical span at residues 60–87 (EVETIWTILPAVILILIALPSLRILYMM). Residues 88–227 (DEINNPALTV…YFENWSASMI (140 aa)) are Mitochondrial intermembrane-facing. 6 residues coordinate Cu cation: H161, C196, E198, C200, H204, and M207. Position 198 (E198) interacts with Mg(2+). Residue Y218 is modified to Phosphotyrosine.

The protein belongs to the cytochrome c oxidase subunit 2 family. As to quaternary structure, component of the cytochrome c oxidase (complex IV, CIV), a multisubunit enzyme composed of 14 subunits. The complex is composed of a catalytic core of 3 subunits MT-CO1, MT-CO2 and MT-CO3, encoded in the mitochondrial DNA, and 11 supernumerary subunits COX4I, COX5A, COX5B, COX6A, COX6B, COX6C, COX7A, COX7B, COX7C, COX8 and NDUFA4, which are encoded in the nuclear genome. The complex exists as a monomer or a dimer and forms supercomplexes (SCs) in the inner mitochondrial membrane with NADH-ubiquinone oxidoreductase (complex I, CI) and ubiquinol-cytochrome c oxidoreductase (cytochrome b-c1 complex, complex III, CIII), resulting in different assemblies (supercomplex SCI(1)III(2)IV(1) and megacomplex MCI(2)III(2)IV(2)). Found in a complex with TMEM177, COA6, COX18, COX20, SCO1 and SCO2. Interacts with TMEM177 in a COX20-dependent manner. Interacts with COX20. Interacts with COX16. The cofactor is Cu cation.

It is found in the mitochondrion inner membrane. It carries out the reaction 4 Fe(II)-[cytochrome c] + O2 + 8 H(+)(in) = 4 Fe(III)-[cytochrome c] + 2 H2O + 4 H(+)(out). Functionally, component of the cytochrome c oxidase, the last enzyme in the mitochondrial electron transport chain which drives oxidative phosphorylation. The respiratory chain contains 3 multisubunit complexes succinate dehydrogenase (complex II, CII), ubiquinol-cytochrome c oxidoreductase (cytochrome b-c1 complex, complex III, CIII) and cytochrome c oxidase (complex IV, CIV), that cooperate to transfer electrons derived from NADH and succinate to molecular oxygen, creating an electrochemical gradient over the inner membrane that drives transmembrane transport and the ATP synthase. Cytochrome c oxidase is the component of the respiratory chain that catalyzes the reduction of oxygen to water. Electrons originating from reduced cytochrome c in the intermembrane space (IMS) are transferred via the dinuclear copper A center (CU(A)) of subunit 2 and heme A of subunit 1 to the active site in subunit 1, a binuclear center (BNC) formed by heme A3 and copper B (CU(B)). The BNC reduces molecular oxygen to 2 water molecules using 4 electrons from cytochrome c in the IMS and 4 protons from the mitochondrial matrix. The polypeptide is Cytochrome c oxidase subunit 2 (MT-CO2) (Maxomys surifer (Indomalayan maxomys)).